We begin with the raw amino-acid sequence, 166 residues long: Large ribosomal subunit protein uL11 (166 aa).

Belongs to the universal ribosomal protein uL11 family.

The chain is Large ribosomal subunit protein uL11 (rpl12) from Dictyostelium discoideum (Social amoeba).